The chain runs to 450 residues: Phosphoglucosamine mutase (450 aa).

Serine 102 functions as the Phosphoserine intermediate in the catalytic mechanism. Mg(2+) contacts are provided by serine 102, aspartate 244, aspartate 246, and aspartate 248. Serine 102 is subject to Phosphoserine.

Belongs to the phosphohexose mutase family. Requires Mg(2+) as cofactor. Post-translationally, activated by phosphorylation.

It carries out the reaction alpha-D-glucosamine 1-phosphate = D-glucosamine 6-phosphate. Its function is as follows. Catalyzes the conversion of glucosamine-6-phosphate to glucosamine-1-phosphate. This chain is Phosphoglucosamine mutase, found in Solidesulfovibrio magneticus (strain ATCC 700980 / DSM 13731 / RS-1) (Desulfovibrio magneticus).